A 353-amino-acid polypeptide reads, in one-letter code: Rhodopsin (353 aa).

The Extracellular segment spans residues M1–A36. 2 N-linked (GlcNAc...) asparagine glycosylation sites follow: N2 and N15. Residues Y37–V61 traverse the membrane as a helical segment. The Cytoplasmic portion of the chain corresponds to T62–N73. The chain crosses the membrane as a helical span at residues Y74–Y96. At T97–C110 the chain is on the extracellular side. C110 and C187 are oxidised to a cystine. A helical membrane pass occupies residues N111 to V133. The short motif at E134–W136 is the 'Ionic lock' involved in activated form stabilization element. The Cytoplasmic portion of the chain corresponds to E134 to H152. A helical membrane pass occupies residues A153–V173. Residues G174–S202 lie on the Extracellular side of the membrane. Residue N200 is glycosylated (N-linked (GlcNAc...) asparagine). Residues F203–G224 traverse the membrane as a helical segment. At R225–R252 the chain is on the cytoplasmic side. Residues M253 to Y274 form a helical membrane-spanning segment. Residues I275–V286 lie on the Extracellular side of the membrane. Residues F287–L308 form a helical membrane-spanning segment. The residue at position 296 (K296) is an N6-(retinylidene)lysine. Residues M309 to A353 lie on the Cytoplasmic side of the membrane. 2 S-palmitoyl cysteine lipidation sites follow: C322 and C323. The interval E331 to A353 is disordered. Residues A334 to A353 are compositionally biased toward low complexity.

Belongs to the G-protein coupled receptor 1 family. Opsin subfamily. Post-translationally, phosphorylated on some or all of the serine and threonine residues present in the C-terminal region. Contains one covalently linked retinal chromophore.

It localises to the membrane. The protein resides in the cell projection. Its subcellular location is the cilium. The protein localises to the photoreceptor outer segment. In terms of biological role, photoreceptor required for image-forming vision at low light intensity. While most salt water fish species use retinal as chromophore, most freshwater fish use 3-dehydroretinal, or a mixture of retinal and 3-dehydroretinal. Light-induced isomerization of 11-cis to all-trans retinal triggers a conformational change that activates signaling via G-proteins. Subsequent receptor phosphorylation mediates displacement of the bound G-protein alpha subunit by arrestin and terminates signaling. In Dicentrarchus labrax (European seabass), this protein is Rhodopsin (rho).